The sequence spans 115 residues: Chaperone protein PrsD (115 aa).

It belongs to the periplasmic pilus chaperone family.

It localises to the periplasm. Its function is as follows. Mediates assembly of pili by forming soluble multimeric complexes with pili subunits as an intermediate step in the assembly process. This is Chaperone protein PrsD (prsD) from Escherichia coli.